The sequence spans 284 residues: RAD52 motif-containing protein 1 (284 aa).

The tract at residues 1-92 (MAELVPFAVP…KQLFQKSPVK (92 aa)) is necessary for nuclear localization and for nucleolar accumulation in response to heat shock. In terms of domain architecture, RRM spans 15–98 (KTLLVWELSS…SPVKVRLGTR (84 aa)). Positions 90 to 133 (PVKVRLGTRHKAVQHQALALNSSRCQELANYYFGFNGWSKRIIK) are necessary for nuclear and nucleolar localization.

In terms of assembly, homodimer.

It is found in the nucleus. The protein localises to the cytoplasm. Its subcellular location is the nucleolus. It localises to the cajal body. The protein resides in the PML body. Functionally, may confer resistance to the antitumor agent cisplatin. Binds to DNA and RNA. This chain is RAD52 motif-containing protein 1 (RDM1), found in Macaca fascicularis (Crab-eating macaque).